The chain runs to 385 residues: Succinate--CoA ligase [ADP-forming] subunit beta (385 aa).

In terms of domain architecture, ATP-grasp spans 9–244 (KEVLRKYGVS…LDEEDPKEIE (236 aa)). ATP is bound by residues lysine 46, 53–55 (GRG), glutamate 99, cysteine 102, and glutamate 107. Residues asparagine 199 and aspartate 213 each coordinate Mg(2+). A Phosphoserine modification is found at serine 220. Residues asparagine 264 and 321-323 (GIM) contribute to the substrate site.

The protein belongs to the succinate/malate CoA ligase beta subunit family. In terms of assembly, heterotetramer of two alpha and two beta subunits. Interacts with BrxC. Requires Mg(2+) as cofactor.

The enzyme catalyses succinate + ATP + CoA = succinyl-CoA + ADP + phosphate. The catalysed reaction is GTP + succinate + CoA = succinyl-CoA + GDP + phosphate. It functions in the pathway carbohydrate metabolism; tricarboxylic acid cycle; succinate from succinyl-CoA (ligase route): step 1/1. Functionally, succinyl-CoA synthetase functions in the citric acid cycle (TCA), coupling the hydrolysis of succinyl-CoA to the synthesis of either ATP or GTP and thus represents the only step of substrate-level phosphorylation in the TCA. The beta subunit provides nucleotide specificity of the enzyme and binds the substrate succinate, while the binding sites for coenzyme A and phosphate are found in the alpha subunit. The polypeptide is Succinate--CoA ligase [ADP-forming] subunit beta (Bacillus subtilis (strain 168)).